A 265-amino-acid chain; its full sequence is Putative cysteine-rich receptor-like protein kinase 9 (265 aa).

Residues 1–23 form the signal peptide; the sequence is MSSLISFIFLFLFSFLTSFKASA. 2 Gnk2-homologous domains span residues 27–131 and 142–244; these read FYLN…DKNI and FILS…LYSF. Residues Asn35, Asn60, Asn69, Asn153, Asn177, and Asn246 are each glycosylated (N-linked (GlcNAc...) asparagine).

The protein belongs to the protein kinase superfamily. Ser/Thr protein kinase family. CRK subfamily.

The protein localises to the secreted. The polypeptide is Putative cysteine-rich receptor-like protein kinase 9 (CRK9) (Arabidopsis thaliana (Mouse-ear cress)).